Reading from the N-terminus, the 323-residue chain is Elongation factor P--(R)-beta-lysine ligase (323 aa).

Ser-76–Glu-78 is a substrate binding site. ATP contacts are provided by residues Arg-100–Glu-102 and Asn-109. Tyr-118 provides a ligand contact to substrate. Glu-242–Leu-243 is a binding site for ATP. Glu-249 is a substrate binding site. Position 298 (Gly-298) interacts with ATP.

This sequence belongs to the class-II aminoacyl-tRNA synthetase family. EpmA subfamily. As to quaternary structure, homodimer.

It catalyses the reaction D-beta-lysine + L-lysyl-[protein] + ATP = N(6)-((3R)-3,6-diaminohexanoyl)-L-lysyl-[protein] + AMP + diphosphate + H(+). Its function is as follows. With EpmB is involved in the beta-lysylation step of the post-translational modification of translation elongation factor P (EF-P). Catalyzes the ATP-dependent activation of (R)-beta-lysine produced by EpmB, forming a lysyl-adenylate, from which the beta-lysyl moiety is then transferred to the epsilon-amino group of a conserved specific lysine residue in EF-P. In Histophilus somni (strain 129Pt) (Haemophilus somnus), this protein is Elongation factor P--(R)-beta-lysine ligase.